Consider the following 88-residue polypeptide: Small ribosomal subunit protein uS17 (88 aa).

Belongs to the universal ribosomal protein uS17 family. Part of the 30S ribosomal subunit.

Functionally, one of the primary rRNA binding proteins, it binds specifically to the 5'-end of 16S ribosomal RNA. The chain is Small ribosomal subunit protein uS17 from Oenococcus oeni (strain ATCC BAA-331 / PSU-1).